Here is a 39-residue protein sequence, read N- to C-terminus: Alpha-conotoxin ArIA (39 aa).

Residues 1-17 (SDGRNVAAKAFHRIGRT) constitute a propeptide that is removed on maturation. 2 cysteine pairs are disulfide-bonded: Cys22–Cys28 and Cys23–Cys36. The segment at 24-26 (SNP) is ser-Xaa-Pro motif, crucial for potent interaction with nAChR. Pro33 is modified (4-hydroxyproline; in ArIA).

The protein belongs to the conotoxin A superfamily. As to expression, expressed by the venom duct.

It localises to the secreted. Its function is as follows. Alpha-conotoxins act on postsynaptic membranes, they bind to the nicotinic acetylcholine receptors (nAChR) and thus inhibit them. This toxin acts as a competitive inhibitor and is 3-fold more potent on alpha-7/CHRNA7 nAChRs (IC(50)=6 nM) than on alpha-3-beta-2/CHRNA3-CHRNB2 nAChR (IC(50)=18 nM). Functionally, acts as a competitive inhibitor and is 33-fold more potent on alpha-7/CHRNA7 nAChRs (IC(50)=1.8 nM) than on alpha-3-beta-2/CHRNA3-CHRNB2 nAChR (IC(50)=60.1 nM). The sequence is that of Alpha-conotoxin ArIA from Conus arenatus (Sand-dusted cone).